The sequence spans 556 residues: Urocanate hydratase (556 aa).

NAD(+) contacts are provided by residues 52–53 (GG), Gln-130, 176–178 (GMG), Glu-196, Arg-201, 242–243 (NA), 263–267 (QTSAH), 273–274 (YL), and Tyr-322. The active site involves Cys-410. Position 492 (Gly-492) interacts with NAD(+).

The protein belongs to the urocanase family. Requires NAD(+) as cofactor.

It localises to the cytoplasm. It carries out the reaction 4-imidazolone-5-propanoate = trans-urocanate + H2O. The protein operates within amino-acid degradation; L-histidine degradation into L-glutamate; N-formimidoyl-L-glutamate from L-histidine: step 2/3. Functionally, catalyzes the conversion of urocanate to 4-imidazolone-5-propionate. This Shewanella oneidensis (strain ATCC 700550 / JCM 31522 / CIP 106686 / LMG 19005 / NCIMB 14063 / MR-1) protein is Urocanate hydratase.